Reading from the N-terminus, the 86-residue chain is Omega-theraphotoxin-Hhn1f 1 (86 aa).

The first 21 residues, 1–21 (MKSIVFVALFGLALLAVVCSA), serve as a signal peptide directing secretion. The propeptide occupies 22 to 50 (SEDAHKELLKEVVRAMVVDKTDAVQAEER). Disulfide bonds link Cys-52-Cys-66, Cys-59-Cys-71, and Cys-65-Cys-78.

This sequence belongs to the neurotoxin 10 (Hwtx-1) family. 17 (Hntx-9) subfamily. As to expression, expressed by the venom gland.

Its subcellular location is the secreted. Ion channel inhibitor. This is Omega-theraphotoxin-Hhn1f 1 from Cyriopagopus hainanus (Chinese bird spider).